Here is a 255-residue protein sequence, read N- to C-terminus: Thiazole synthase (255 aa).

Residue lysine 96 is the Schiff-base intermediate with DXP of the active site. Residues glycine 157, 183 to 184 (AG), and 205 to 206 (NT) each bind 1-deoxy-D-xylulose 5-phosphate.

The protein belongs to the ThiG family. In terms of assembly, homotetramer. Forms heterodimers with either ThiH or ThiS.

It is found in the cytoplasm. It catalyses the reaction [ThiS sulfur-carrier protein]-C-terminal-Gly-aminoethanethioate + 2-iminoacetate + 1-deoxy-D-xylulose 5-phosphate = [ThiS sulfur-carrier protein]-C-terminal Gly-Gly + 2-[(2R,5Z)-2-carboxy-4-methylthiazol-5(2H)-ylidene]ethyl phosphate + 2 H2O + H(+). It participates in cofactor biosynthesis; thiamine diphosphate biosynthesis. Functionally, catalyzes the rearrangement of 1-deoxy-D-xylulose 5-phosphate (DXP) to produce the thiazole phosphate moiety of thiamine. Sulfur is provided by the thiocarboxylate moiety of the carrier protein ThiS. In vitro, sulfur can be provided by H(2)S. The protein is Thiazole synthase of Staphylococcus haemolyticus (strain JCSC1435).